The chain runs to 165 residues: uncharacterized protein (165 aa).

This is an uncharacterized protein from Rickettsia conorii (strain ATCC VR-613 / Malish 7).